Reading from the N-terminus, the 94-residue chain is Large ribosomal subunit protein bL25 (94 aa).

The protein belongs to the bacterial ribosomal protein bL25 family. In terms of assembly, part of the 50S ribosomal subunit; part of the 5S rRNA/L5/L18/L25 subcomplex. Contacts the 5S rRNA. Binds to the 5S rRNA independently of L5 and L18.

In terms of biological role, this is one of the proteins that binds to the 5S RNA in the ribosome where it forms part of the central protuberance. In Klebsiella pneumoniae (strain 342), this protein is Large ribosomal subunit protein bL25.